The sequence spans 282 residues: NADPH-dependent 7-cyano-7-deazaguanine reductase (282 aa).

Residue 88-90 participates in substrate binding; it reads IES. An NADPH-binding site is contributed by 90–91; the sequence is SK. The active-site Thioimide intermediate is the cysteine 190. Aspartate 197 (proton donor) is an active-site residue. 229 to 230 is a substrate binding site; that stretch reads HE. 258-259 is a binding site for NADPH; sequence RG.

The protein belongs to the GTP cyclohydrolase I family. QueF type 2 subfamily. Homodimer.

It is found in the cytoplasm. It catalyses the reaction 7-aminomethyl-7-carbaguanine + 2 NADP(+) = 7-cyano-7-deazaguanine + 2 NADPH + 3 H(+). It functions in the pathway tRNA modification; tRNA-queuosine biosynthesis. Functionally, catalyzes the NADPH-dependent reduction of 7-cyano-7-deazaguanine (preQ0) to 7-aminomethyl-7-deazaguanine (preQ1). The chain is NADPH-dependent 7-cyano-7-deazaguanine reductase from Escherichia coli O45:K1 (strain S88 / ExPEC).